The chain runs to 112 residues: UPF0102 protein THEYE_A1950 (112 aa).

It belongs to the UPF0102 family.

This chain is UPF0102 protein THEYE_A1950, found in Thermodesulfovibrio yellowstonii (strain ATCC 51303 / DSM 11347 / YP87).